Here is a 432-residue protein sequence, read N- to C-terminus: Homogentisate 1,2-dioxygenase (432 aa).

Catalysis depends on His286, which acts as the Proton acceptor. His329 and Glu335 together coordinate Fe cation. Residues Tyr344 and His365 each contribute to the homogentisate site. A Fe cation-binding site is contributed by His365.

This sequence belongs to the homogentisate dioxygenase family. Hexamer; dimer of trimers. The cofactor is Fe cation.

The enzyme catalyses homogentisate + O2 = 4-maleylacetoacetate + H(+). It functions in the pathway amino-acid degradation; L-phenylalanine degradation; acetoacetate and fumarate from L-phenylalanine: step 4/6. Its function is as follows. Involved in the catabolism of homogentisate (2,5-dihydroxyphenylacetate or 2,5-OH-PhAc), a central intermediate in the degradation of phenylalanine and tyrosine. Catalyzes the oxidative ring cleavage of the aromatic ring of homogentisate to yield maleylacetoacetate. This is Homogentisate 1,2-dioxygenase from Bordetella bronchiseptica (strain ATCC BAA-588 / NCTC 13252 / RB50) (Alcaligenes bronchisepticus).